The sequence spans 206 residues: Recombination protein RecR (206 aa).

A C4-type zinc finger spans residues 58-73 (CENCHNISDVAVCEIC). The region spanning 81–176 (QIVCVVEDVR…ITSSIARGIS (96 aa)) is the Toprim domain.

It belongs to the RecR family.

Its function is as follows. May play a role in DNA repair. It seems to be involved in an RecBC-independent recombinational process of DNA repair. It may act with RecF and RecO. The chain is Recombination protein RecR from Flavobacterium psychrophilum (strain ATCC 49511 / DSM 21280 / CIP 103535 / JIP02/86).